A 245-amino-acid polypeptide reads, in one-letter code: MEFWGIEVKSGKPVTVTPEEGILIHVSQASLGECKNKKGEFVPLHVKVGNQNLVLGTLSTENIPQLFCDLVFDKEFELSHTWGKGSVYFVGYKTPNIEPQGYSEEEEEEEEEVPAGNAAKAVAKPKAKPAEVKPAVDDEEDESDSDGMDEDDSDGEDSEEEEPTPKKPASSKKRANETTPKAPVSAKKAKVAVTPQKTDEKKKGGKAANQSPKSASQVSCGSCKKTFNSGNALESHNKAKHAAAK.

At M1 the chain carries N-acetylmethionine. 2 required to repress transcription regions span residues 2 to 5 (EFWG) and 101 to 162 (GYSE…EEEE). The disordered stretch occupies residues 99-245 (PQGYSEEEEE…HNKAKHAAAK (147 aa)). Over residues 103 to 113 (SEEEEEEEEEV) the composition is skewed to acidic residues. Over residues 114–124 (PAGNAAKAVAK) the composition is skewed to low complexity. Residues 137-162 (DDEEDESDSDGMDEDDSDGEDSEEEE) show a composition bias toward acidic residues. The segment covering 178–195 (TTPKAPVSAKKAKVAVTP) has biased composition (low complexity). Residues 208–234 (ANQSPKSASQVSCGSCKKTFNSGNALE) show a composition bias toward polar residues. At S211 the chain carries Phosphoserine. A C2H2-type zinc finger spans residues 218-241 (VSCGSCKKTFNSGNALESHNKAKH).

Belongs to the histone deacetylase HD2 family. As to quaternary structure, interacts with DNMT2. Interacts with DEK3. In terms of tissue distribution, expressed in leaves, roots, stems, young plantlets, flowers and siliques. Highest levels in ovules, embryos, shoot apical meristems and first leaves. Also expressed in somatic embryos.

It localises to the nucleus. The protein resides in the nucleolus. In terms of biological role, probably mediates the deacetylation of lysine residues on the N-terminal part of the core histones (H2A, H2B, H3 and H4). Histone deacetylation gives a tag for epigenetic repression and plays an important role in transcriptional regulation, cell cycle progression and developmental events. Required for histone H3 'Lys-9' deacetylation. Involved in rRNA gene silencing in nucleolar dominance. Seems to be implicated in the regulation of genes involved in seeds development. The chain is Histone deacetylase HDT1 from Arabidopsis thaliana (Mouse-ear cress).